Reading from the N-terminus, the 32-residue chain is Ovostatin (32 aa).

The isoglutamyl cysteine thioester (Cys-Gln) cross-link spans 27–30; that stretch reads CGEQ.

This sequence belongs to the protease inhibitor I39 (alpha-2-macroglobulin) family. As to quaternary structure, homotetramer, which consists of two pairs of disulfide-linked chains.

The protein localises to the secreted. Functionally, is able to inhibit all four classes of proteinases by a unique 'trapping' mechanism. This protein has a peptide stretch, called the 'bait region' which contains specific cleavage sites for different proteinases. When a proteinase cleaves the bait region, a conformational change is induced in the protein which traps the proteinase. The entrapped enzyme remains active against low molecular weight substrates (activity against high molecular weight substrates is greatly reduced). Following cleavage in the bait region a thioester bond is hydrolyzed and mediates the covalent binding of the protein to the proteinase. This chain is Ovostatin, found in Anas platyrhynchos (Mallard).